The primary structure comprises 901 residues: Clathrin coat assembly protein AP180 (901 aa).

Residues 14–145 enclose the ENTH domain; it reads QYSVTGSAVA…FSYRQMAFDF (132 aa). Disordered stretches follow at residues 285-326, 397-424, 497-522, and 573-606; these read LEGK…DTSP, PISDPFAPEPSPPTTTTEPASASASTTT, PETSAPVVTPTASTAPPVPATAPSPA, and AAAPKPDAAPSIDLFGTDAFSSPPRGASPVPESS. Phosphoserine is present on residues S296, S300, and S306. A compositionally biased stretch (polar residues) spans 302–324; the sequence is LSKSSPATTVTSPNSTPAKTIDT. A glycan (O-linked (GlcNAc) threonine) is linked at T310. At S313 the chain carries Phosphoserine. T317 is modified (phosphothreonine). Low complexity-rich tracts occupy residues 410 to 424 and 500 to 511; these read TTTTEPASASASTTT and SAPVVTPTASTA. The span at 512-522 shows a compositional bias: pro residues; that stretch reads PPVPATAPSPA. Phosphoserine occurs at positions 594, 600, 621, 627, and 761. 2 disordered regions span residues 803–845 and 857–901; these read SAGV…GMTM and MMRP…KDFL. Residues 835–845 are compositionally biased toward low complexity; that stretch reads GMPPSGTGMTM. R859 bears the Asymmetric dimethylarginine; alternate mark. An Omega-N-methylarginine; alternate modification is found at R859. Over residues 870–882 the composition is skewed to polar residues; that stretch reads TQLSPSPTPATQS. The segment covering 887–901 has biased composition (basic and acidic residues); that stretch reads PAKDPLADLNIKDFL.

This sequence belongs to the PICALM/SNAP91 family. As to quaternary structure, binds AP2A2. Interacts with AP2B1; clathrin competes with SNAP91. Thr-310 can be modified by the addition of N-acetylglucosamine which can be further phosphorylated. There is no evidence for direct Thr-310 phosphorylation. As to expression, brain. Associated with the synapses.

It is found in the cell membrane. The protein localises to the membrane. The protein resides in the coated pit. In terms of biological role, adaptins are components of the adaptor complexes which link clathrin to receptors in coated vesicles. Clathrin-associated protein complexes are believed to interact with the cytoplasmic tails of membrane proteins, leading to their selection and concentration. Binding of AP180 to clathrin triskelia induces their assembly into 60-70 nm coats. This Mus musculus (Mouse) protein is Clathrin coat assembly protein AP180 (Snap91).